Consider the following 314-residue polypeptide: L-lactate dehydrogenase (314 aa).

NAD(+)-binding positions include V17, D38, K43, Y69, and 83–84; that span reads GA. Residues Q86 and R92 each contribute to the substrate site. Residues S105, 122-124, and S147 each bind NAD(+); that span reads ASN. 124–127 contributes to the substrate binding site; sequence NPVD. Substrate is bound at residue 152 to 155; it reads DSAR. Beta-D-fructose 1,6-bisphosphate-binding residues include R157 and H172. H179 (proton acceptor) is an active-site residue. Y223 carries the phosphotyrosine modification. T232 serves as a coordination point for substrate.

This sequence belongs to the LDH/MDH superfamily. LDH family. In terms of assembly, homotetramer.

The protein localises to the cytoplasm. It catalyses the reaction (S)-lactate + NAD(+) = pyruvate + NADH + H(+). The protein operates within fermentation; pyruvate fermentation to lactate; (S)-lactate from pyruvate: step 1/1. Allosterically activated by fructose 1,6-bisphosphate (FBP). Catalyzes the conversion of lactate to pyruvate. The chain is L-lactate dehydrogenase from Corynebacterium glutamicum (strain ATCC 13032 / DSM 20300 / JCM 1318 / BCRC 11384 / CCUG 27702 / LMG 3730 / NBRC 12168 / NCIMB 10025 / NRRL B-2784 / 534).